A 78-amino-acid polypeptide reads, in one-letter code: UPF0349 protein GK2958 (78 aa).

The protein belongs to the UPF0349 family.

This chain is UPF0349 protein GK2958, found in Geobacillus kaustophilus (strain HTA426).